Consider the following 518-residue polypeptide: Putative Rieske 2Fe-2S iron-sulfur protein MSMEG_6410/MSMEI_6242 (518 aa).

K375 is covalently cross-linked (Isoglutamyl lysine isopeptide (Lys-Gln) (interchain with Q-Cter in protein Pup)). One can recognise a Rieske domain in the interval 431-518; the sequence is LYTFFKCLTD…KGHELRCQKL (88 aa). Residues C471, H473, C491, and H494 each coordinate [2Fe-2S] cluster.

[2Fe-2S] cluster serves as cofactor.

This is Putative Rieske 2Fe-2S iron-sulfur protein MSMEG_6410/MSMEI_6242 from Mycolicibacterium smegmatis (strain ATCC 700084 / mc(2)155) (Mycobacterium smegmatis).